Consider the following 650-residue polypeptide: Threonine--tRNA ligase (650 aa).

A TGS domain is found at 1 to 66; the sequence is MVQITLPDGS…EHDAQLAIVT (66 aa). Positions 247–538 are catalytic; that stretch reads DHRKIGRDLD…LIENHAGAMP (292 aa). Residues Cys-338, His-389, and His-515 each coordinate Zn(2+).

The protein belongs to the class-II aminoacyl-tRNA synthetase family. As to quaternary structure, homodimer. The cofactor is Zn(2+).

The protein localises to the cytoplasm. It carries out the reaction tRNA(Thr) + L-threonine + ATP = L-threonyl-tRNA(Thr) + AMP + diphosphate + H(+). Its function is as follows. Catalyzes the attachment of threonine to tRNA(Thr) in a two-step reaction: L-threonine is first activated by ATP to form Thr-AMP and then transferred to the acceptor end of tRNA(Thr). Also edits incorrectly charged L-seryl-tRNA(Thr). The sequence is that of Threonine--tRNA ligase from Bordetella petrii (strain ATCC BAA-461 / DSM 12804 / CCUG 43448).